The chain runs to 553 residues: Carboxypeptidase Y homolog A (553 aa).

Residues 1-17 (MRVLSTTLLIGAAAAAV) form the signal peptide. Residues 18–134 (SPPQQVLQAP…RLEAFDLRVK (117 aa)) constitute a propeptide that is removed on maturation. Disulfide bonds link Cys189-Cys428, Cys323-Cys337, Cys347-Cys370, Cys354-Cys363, and Cys392-Cys398. Asn220 carries N-linked (GlcNAc...) asparagine glycosylation. Residue Ser276 is part of the active site. Asp467 is an active-site residue. Asn518 carries N-linked (GlcNAc...) asparagine glycosylation. His529 is an active-site residue.

Belongs to the peptidase S10 family.

Its subcellular location is the vacuole. It carries out the reaction Release of a C-terminal amino acid with broad specificity.. Its function is as follows. Vacuolar carboxypeptidase involved in degradation of small peptides. Digests preferentially peptides containing an aliphatic or hydrophobic residue in P1' position, as well as methionine, leucine or phenylalanine in P1 position of ester substrate. This Talaromyces stipitatus (strain ATCC 10500 / CBS 375.48 / QM 6759 / NRRL 1006) (Penicillium stipitatum) protein is Carboxypeptidase Y homolog A (cpyA).